A 192-amino-acid chain; its full sequence is Late embryogenesis abundant protein 47 (192 aa).

Positions 5-9 (QLQKP) match the Nuclear localization signal (NLS) motif. 2 consecutive SMP domains span residues 68 to 125 (ITIG…LNAR) and 133 to 190 (TTLA…RINQ). Residues 146-174 (LPSDKAATRKDAEGVTGAEMRNDPHLTTY) are disordered. A compositionally biased stretch (basic and acidic residues) spans 147–158 (PSDKAATRKDAE).

The protein belongs to the LEA type SMP family.

It localises to the cytoplasm. The protein localises to the nucleus. Its function is as follows. LEA proteins are late embryonic proteins abundant in higher plant seed embryos. The function of those proteins is not known. In Arabidopsis thaliana (Mouse-ear cress), this protein is Late embryogenesis abundant protein 47.